Here is a 203-residue protein sequence, read N- to C-terminus: Endo-type membrane-bound lytic murein transglycosylase A (203 aa).

The first 15 residues, 1-15, serve as a signal peptide directing secretion; sequence MKLRWLMWLVVFLAG. C16 carries N-palmitoyl cysteine lipidation. C16 carries S-diacylglycerol cysteine lipidation.

This sequence belongs to the transglycosylase Slt family.

The protein localises to the cell outer membrane. It carries out the reaction Endolytic cleavage of the (1-&gt;4)-beta-glycosidic linkage between N-acetylmuramic acid (MurNAc) and N-acetylglucosamine (GlcNAc) residues in peptidoglycan with concomitant formation of a 1,6-anhydrobond in the MurNAc residue.. Murein-degrading enzyme. May play a role in recycling of muropeptides during cell elongation and/or cell division. Preferentially cleaves at a distance of more than two disaccharide units from the ends of the glycan chain. The chain is Endo-type membrane-bound lytic murein transglycosylase A from Cronobacter sakazakii (strain ATCC BAA-894) (Enterobacter sakazakii).